A 276-amino-acid chain; its full sequence is METLELQGAKLRYHQVGQGPVLIFIPGANGTGDIFLPLAEQLKDHFTVVAVDRRDYGESELTEPLPDSASNPDSDYRVKRDAQDIAELAKSLSDEPVYILGSSSGSIVAMHVLKDYPEVVKKIAFHEPPINTFLPDSTYWKDKNDDIVHQILTEGLEKGMKTFGETLNIAPIDAKMMSQPADTEEGRIEQYKRTMFWSEFEIRQYTHSDITLDDFTKYSDKITLLNGTDSRGSFPQDVNFYINKETGIPIVDIPGGHLGYIQKPEGFADVLLNMWG.

In terms of domain architecture, AB hydrolase-1 spans 20–137; sequence PVLIFIPGAN…PPINTFLPDS (118 aa). Residues 57–76 are disordered; sequence GESELTEPLPDSASNPDSDY.

It belongs to the AB hydrolase superfamily.

This is an uncharacterized protein from Staphylococcus aureus (strain COL).